We begin with the raw amino-acid sequence, 32 residues long: Potassium channel toxin alpha-KTx 9.4 (32 aa).

3 disulfides stabilise this stretch: Cys-3/Cys-19, Cys-6/Cys-24, and Cys-10/Cys-26.

As to expression, expressed by the venom gland.

It localises to the secreted. Its function is as follows. Blocker of human voltage-gated potassium channel Kv1.1/KCNA1. This chain is Potassium channel toxin alpha-KTx 9.4, found in Hottentotta tamulus (Eastern Indian scorpion).